Here is a 511-residue protein sequence, read N- to C-terminus: Spermatogenesis-associated protein 2 (511 aa).

Residues 77 to 149 enclose the PUB domain; sequence ALHCAFSMLE…AYKLKELVES (73 aa). The short motif at 320–337 is the PIM motif element; the sequence is TYFPTQDDVDLYTDSEPR.

The protein belongs to the SPATA2 family. As to quaternary structure, interacts (via the PIM motif) with RNF31/HOIP (via the PUB domain); the interaction is direct. Interacts (via the PUB domain) with CYLD; the interaction is direct. In terms of tissue distribution, expressed in the testis and to a lesser extent in the brain, while skeletal muscle and kidney show weak expression.

It is found in the cytoplasm. The protein localises to the nucleus. Functionally, bridging factor that mediates the recruitment of CYLD to the LUBAC complex, thereby regulating TNF-alpha-induced necroptosis. Acts as a direct binding intermediate that bridges RNF31/HOIP, the catalytic subunit of the LUBAC complex, and the deubiquitinase (CYLD), thereby recruiting CYLD to the TNF-R1 signaling complex (TNF-RSC). Required to activate the 'Met-1'- (linear) and 'Lys-63'-linked deubiquitinase activities of CYLD. Controls the kinase activity of RIPK1 and TNF-alpha-induced necroptosis by promoting 'Met-1'-linked deubiquitination of RIPK1 by CYLD. The sequence is that of Spermatogenesis-associated protein 2 from Rattus norvegicus (Rat).